Reading from the N-terminus, the 469-residue chain is Neuraminidase (469 aa).

Residues 1-9 (MNPNQKIIT) lie on the Intravirion side of the membrane. The helical transmembrane segment at 10–30 (IGSVSLTIATVCFLMQIAILV) threads the bilayer. Positions 11 to 33 (GSVSLTIATVCFLMQIAILVTTV) are involved in apical transport and lipid raft association. Over 31-469 (TTVTLHFKQY…DGADINLMPI (439 aa)) the chain is Virion surface. Residues 36 to 88 (HFKQYECDSPANNQVMPCEPIIIERNITEIVYLTNTTIEKEICPKLVEYRNWS) are hypervariable stalk region. N-linked (GlcNAc...) asparagine; by host glycans are attached at residues Asn-61, Asn-70, and Asn-86. The interval 91–469 (QCKITGFAPF…DGADINLMPI (379 aa)) is head of neuraminidase. 8 cysteine pairs are disulfide-bonded: Cys-92/Cys-417, Cys-124/Cys-129, Cys-183/Cys-230, Cys-232/Cys-237, Cys-278/Cys-291, Cys-280/Cys-289, Cys-318/Cys-337, and Cys-421/Cys-447. Arg-118 is a substrate binding site. Residue Asn-146 is glycosylated (N-linked (GlcNAc...) asparagine; by host). Asp-151 acts as the Proton donor/acceptor in catalysis. Substrate is bound at residue Arg-152. N-linked (GlcNAc...) asparagine; by host glycans are attached at residues Asn-200 and Asn-234. 276–277 (EE) provides a ligand contact to substrate. Arg-292 lines the substrate pocket. 3 residues coordinate Ca(2+): Asp-293, Gly-297, and Asp-324. The disordered stretch occupies residues 326 to 350 (PRNNDRSSNSNCRNPNNDKGNHGVK). The segment covering 331-343 (RSSNSNCRNPNND) has biased composition (low complexity). Arg-371 provides a ligand contact to substrate. N-linked (GlcNAc...) asparagine; by host glycosylation is present at Asn-402. Tyr-406 (nucleophile) is an active-site residue.

This sequence belongs to the glycosyl hydrolase 34 family. In terms of assembly, homotetramer. Requires Ca(2+) as cofactor. In terms of processing, N-glycosylated.

Its subcellular location is the virion membrane. The protein localises to the host apical cell membrane. It carries out the reaction Hydrolysis of alpha-(2-&gt;3)-, alpha-(2-&gt;6)-, alpha-(2-&gt;8)- glycosidic linkages of terminal sialic acid residues in oligosaccharides, glycoproteins, glycolipids, colominic acid and synthetic substrates.. Its activity is regulated as follows. Inhibited by the neuraminidase inhibitors zanamivir (Relenza) and oseltamivir (Tamiflu). These drugs interfere with the release of progeny virus from infected cells and are effective against all influenza strains. Resistance to neuraminidase inhibitors is quite rare. Its function is as follows. Catalyzes the removal of terminal sialic acid residues from viral and cellular glycoconjugates. Cleaves off the terminal sialic acids on the glycosylated HA during virus budding to facilitate virus release. Additionally helps virus spread through the circulation by further removing sialic acids from the cell surface. These cleavages prevent self-aggregation and ensure the efficient spread of the progeny virus from cell to cell. Otherwise, infection would be limited to one round of replication. Described as a receptor-destroying enzyme because it cleaves a terminal sialic acid from the cellular receptors. May facilitate viral invasion of the upper airways by cleaving the sialic acid moieties on the mucin of the airway epithelial cells. Likely to plays a role in the budding process through its association with lipid rafts during intracellular transport. May additionally display a raft-association independent effect on budding. Plays a role in the determination of host range restriction on replication and virulence. Sialidase activity in late endosome/lysosome traffic seems to enhance virus replication. The polypeptide is Neuraminidase (Aves (whales)).